Here is a 715-residue protein sequence, read N- to C-terminus: Polyribonucleotide nucleotidyltransferase (715 aa).

Positions 489 and 495 each coordinate Mg(2+). The KH domain occupies 556–615; it reads PRIETLRIPTEKIREVIGTGGKVIREICEKTGAKINIEDDGTVKVASSDGNSIKAAINWI. Residues 625–693 form the S1 motif domain; sequence GHIYDGTVVK…DRGKVRLSMR (69 aa).

This sequence belongs to the polyribonucleotide nucleotidyltransferase family. Mg(2+) serves as cofactor.

The protein resides in the cytoplasm. It catalyses the reaction RNA(n+1) + phosphate = RNA(n) + a ribonucleoside 5'-diphosphate. In terms of biological role, involved in mRNA degradation. Catalyzes the phosphorolysis of single-stranded polyribonucleotides processively in the 3'- to 5'-direction. This Beijerinckia indica subsp. indica (strain ATCC 9039 / DSM 1715 / NCIMB 8712) protein is Polyribonucleotide nucleotidyltransferase.